Consider the following 85-residue polypeptide: Small ribosomal subunit protein bS16 (85 aa).

This sequence belongs to the bacterial ribosomal protein bS16 family.

This chain is Small ribosomal subunit protein bS16, found in Xanthomonas oryzae pv. oryzae (strain PXO99A).